The sequence spans 455 residues: Argininosuccinate lyase (455 aa).

This sequence belongs to the lyase 1 family. Argininosuccinate lyase subfamily.

The protein localises to the cytoplasm. It catalyses the reaction 2-(N(omega)-L-arginino)succinate = fumarate + L-arginine. It participates in amino-acid biosynthesis; L-arginine biosynthesis; L-arginine from L-ornithine and carbamoyl phosphate: step 3/3. The polypeptide is Argininosuccinate lyase (Caulobacter vibrioides (strain ATCC 19089 / CIP 103742 / CB 15) (Caulobacter crescentus)).